Here is a 204-residue protein sequence, read N- to C-terminus: MISAEMVKELRERTGAGMMDCKKALEDANGDMEKAIELLRERGLAKAAKRASRVAAEGIVESYIHGNGRIGVLVEINCETDFVARNEEFRQFAKDIAMQIAAANPKYVSREEIPQEVIEREKAILRQQALNEGKPENVVDRIIEGRLEKFFEEVCLLEQPWIKNPDMKIKDLLTEKIAKIGENIVIRRFARFERGEGIEKAASC.

The involved in Mg(2+) ion dislocation from EF-Tu stretch occupies residues 80–83; that stretch reads TDFV.

This sequence belongs to the EF-Ts family.

It localises to the cytoplasm. Its function is as follows. Associates with the EF-Tu.GDP complex and induces the exchange of GDP to GTP. It remains bound to the aminoacyl-tRNA.EF-Tu.GTP complex up to the GTP hydrolysis stage on the ribosome. The protein is Elongation factor Ts of Caldicellulosiruptor saccharolyticus (strain ATCC 43494 / DSM 8903 / Tp8T 6331).